The following is a 365-amino-acid chain: Phosphate acyltransferase (365 aa).

Belongs to the PlsX family. Homodimer. Probably interacts with PlsY.

The protein resides in the cytoplasm. It catalyses the reaction a fatty acyl-[ACP] + phosphate = an acyl phosphate + holo-[ACP]. It participates in lipid metabolism; phospholipid metabolism. In terms of biological role, catalyzes the reversible formation of acyl-phosphate (acyl-PO(4)) from acyl-[acyl-carrier-protein] (acyl-ACP). This enzyme utilizes acyl-ACP as fatty acyl donor, but not acyl-CoA. The protein is Phosphate acyltransferase of Picosynechococcus sp. (strain ATCC 27264 / PCC 7002 / PR-6) (Agmenellum quadruplicatum).